Consider the following 316-residue polypeptide: Porphobilinogen deaminase (316 aa).

The residue at position 245 (Cys245) is an S-(dipyrrolylmethanemethyl)cysteine.

Belongs to the HMBS family. Monomer. It depends on dipyrromethane as a cofactor.

The catalysed reaction is 4 porphobilinogen + H2O = hydroxymethylbilane + 4 NH4(+). Its pathway is porphyrin-containing compound metabolism; protoporphyrin-IX biosynthesis; coproporphyrinogen-III from 5-aminolevulinate: step 2/4. The protein operates within porphyrin-containing compound metabolism; chlorophyll biosynthesis. Its function is as follows. Tetrapolymerization of the monopyrrole PBG into the hydroxymethylbilane pre-uroporphyrinogen in several discrete steps. This chain is Porphobilinogen deaminase, found in Prochlorococcus marinus subsp. pastoris (strain CCMP1986 / NIES-2087 / MED4).